The chain runs to 149 residues: Low molecular weight protein-tyrosine-phosphatase Wzb (149 aa).

Cysteine 9 functions as the Nucleophile in the catalytic mechanism. Residue arginine 15 is part of the active site. Aspartate 115 functions as the Proton donor in the catalytic mechanism.

This sequence belongs to the low molecular weight phosphotyrosine protein phosphatase family.

The enzyme catalyses O-phospho-L-tyrosyl-[protein] + H2O = L-tyrosyl-[protein] + phosphate. It participates in glycan metabolism; exopolysaccharide biosynthesis. Functionally, dephosphorylates Wzc. Required for the extracellular polysaccharide colanic acid synthesis. Probably involved in the export of colanic acid from the cell to medium. Involved in protection of cells against contact-dependent growth inhibition (CDI). The protein is Low molecular weight protein-tyrosine-phosphatase Wzb (wzb) of Salmonella typhimurium (strain LT2 / SGSC1412 / ATCC 700720).